Consider the following 141-residue polypeptide: Acetyltransferase YE1169 (141 aa).

The 141-residue stretch at 1–141 (MEIRVFQQSD…GKRLIVDQEY (141 aa)) folds into the N-acetyltransferase domain.

It belongs to the acetyltransferase family. YpeA subfamily.

The polypeptide is Acetyltransferase YE1169 (Yersinia enterocolitica serotype O:8 / biotype 1B (strain NCTC 13174 / 8081)).